Here is a 267-residue protein sequence, read N- to C-terminus: Non-homologous end joining protein Ku (267 aa).

In terms of domain architecture, Ku spans 11 to 195 (AVGQVSCAVA…KVKGEMLELA (185 aa)). The disordered stretch occupies residues 229 to 267 (GRKPKRKAAPKKAREPSDLMAALRESVAATERPRRRKAG).

The protein belongs to the prokaryotic Ku family. As to quaternary structure, homodimer. Interacts with LigD.

Functionally, with LigD forms a non-homologous end joining (NHEJ) DNA repair enzyme, which repairs dsDNA breaks with reduced fidelity. Binds linear dsDNA with 5'- and 3'- overhangs but not closed circular dsDNA nor ssDNA. Recruits and stimulates the ligase activity of LigD. This is Non-homologous end joining protein Ku from Cereibacter sphaeroides (strain KD131 / KCTC 12085) (Rhodobacter sphaeroides).